A 554-amino-acid polypeptide reads, in one-letter code: D-3-phosphoglycerate dehydrogenase (554 aa).

Residues Lys177–Ile178, Asp197, Cys256–Arg258, and Asp282 each bind NAD(+). The active site involves Arg258. Glu287 is an active-site residue. His305 functions as the Proton donor in the catalytic mechanism. NAD(+) is bound at residue His305–Ala308. Residues Met482 to Leu554 form the ACT domain.

Belongs to the D-isomer specific 2-hydroxyacid dehydrogenase family.

It catalyses the reaction (2R)-3-phosphoglycerate + NAD(+) = 3-phosphooxypyruvate + NADH + H(+). The catalysed reaction is (R)-2-hydroxyglutarate + NAD(+) = 2-oxoglutarate + NADH + H(+). It participates in amino-acid biosynthesis; L-serine biosynthesis; L-serine from 3-phospho-D-glycerate: step 1/3. Catalyzes the reversible oxidation of 3-phospho-D-glycerate to 3-phosphonooxypyruvate, the first step of the phosphorylated L-serine biosynthesis pathway. Also catalyzes the reversible oxidation of 2-hydroxyglutarate to 2-oxoglutarate. This Synechocystis sp. (strain ATCC 27184 / PCC 6803 / Kazusa) protein is D-3-phosphoglycerate dehydrogenase (serA).